The sequence spans 499 residues: Glutamyl-tRNA(Gln) amidotransferase subunit A (499 aa).

Active-site charge relay system residues include Lys75 and Ser150. The Acyl-ester intermediate role is filled by Ser174.

Belongs to the amidase family. GatA subfamily. Heterotrimer of A, B and C subunits.

The enzyme catalyses L-glutamyl-tRNA(Gln) + L-glutamine + ATP + H2O = L-glutaminyl-tRNA(Gln) + L-glutamate + ADP + phosphate + H(+). Functionally, allows the formation of correctly charged Gln-tRNA(Gln) through the transamidation of misacylated Glu-tRNA(Gln) in organisms which lack glutaminyl-tRNA synthetase. The reaction takes place in the presence of glutamine and ATP through an activated gamma-phospho-Glu-tRNA(Gln). This chain is Glutamyl-tRNA(Gln) amidotransferase subunit A, found in Ralstonia pickettii (strain 12J).